A 652-amino-acid chain; its full sequence is Forkhead box protein O1 (652 aa).

Disordered stretches follow at residues M1–S62 and V112–R154. Phosphothreonine; by PKB/AKT1 or PKB/AKT2 and SGK1 is present on T24. A compositionally biased stretch (low complexity) spans S35–S62. The segment covering P114–P133 has biased composition (pro residues). Residues S134–P146 show a composition bias toward low complexity. The fork-head DNA-binding region spans A156–S232. 2 DNA-binding regions span residues N208–S215 and S231–W234. S209 is modified (phosphoserine; by STK4/MST1). Phosphoserine is present on residues S215, S231, and S232. Disordered stretches follow at residues S231–S342 and S383–S410. An N6-acetyllysine mark is found at K242 and K245. The residue at position 246 (S246) is a Phosphoserine; by CDK1. 2 positions are modified to omega-N-methylarginine; by PRMT1: R248 and R250. A Nuclear localization signal motif is present at residues R248–R250. A Phosphoserine; by PKB/AKT1 and SGK1 modification is found at S253. 3 positions are modified to N6-acetyllysine: K259, K262, and K271. Basic residues predominate over residues A261–A272. The segment at G280 to P562 is sufficient for interaction with NLK. A phosphoserine mark is found at S284 and S295. The span at N306 to G323 shows a compositional bias: polar residues. The residue at position 316 (S316) is a Phosphoserine; by PKB/AKT1 or PKB/AKT2. S319 is subject to Phosphoserine; by CK1 and SGK1. Phosphoserine; by CK1 is present on S322. S326 bears the Phosphoserine mark. Residue T330 is modified to Phosphothreonine. The required for interaction with RUNX2 stretch occupies residues S360–P456. Over residues P392–C401 the composition is skewed to polar residues. K420 bears the N6-acetyllysine mark. Residues L459–L463 carry the Required for interaction with SIRT1 motif.

Interacts with EP300 and CREBBP; the interactions acetylate FOXO1. Interacts with the 14-3-3 proteins, YWHAG and YWHAZ; the interactions require insulin-stimulated phosphorylation on Thr-24, promote nuclear exit and loss of transcriptional activity. Interacts with SKP2; the interaction ubiquitinates FOXO1 leading to its proteasomal degradation. Interacts with PMRT1; methylates FOXO1, prevents PKB/AKT1 phosphorylation and retains FOXO1 in the nucleus. Interacts (via an N-terminal domain) with FCOR; the interaction is direct, occurs in a forskolin-independent manner and prevents SIRT1 binding to FOXO1. Interacts (via the C-terminal half) with ATF4 (via its DNA-binding domain); the interaction occurs in osteoblasts, regulates glucose homeostasis via suppression of beta-cell proliferation and subsequent decrease in insulin production. Interacts with RUNX2; the interaction inhibits RUNX2 transcriptional activity and mediates the IGF1/insulin-dependent BGLAP expression in osteoblasts. Interacts with PPP2R1A; the interaction regulates the dephosphorylation of FOXO1 at Thr-24 and Ser-253 leading to its nuclear import. Binds to CDK1. Interacts with LRPPRC. Interacts with RUNX2; the interaction inhibits RUNX2 transcriptional activity and mediates the IGF1/insulin-dependent BGLAP expression in osteoblasts. Interacts with NLK. Interacts with SIRT1; the interaction results in the deacetylation of FOXO1 leading to activation of FOXO1-mediated transcription of genes involved in DNA repair and stress resistance. The interaction requires the presence of KRIT1 and is inhibited by FCOR. Interacts with SIRT2; the interaction is disrupted in response to oxidative stress or serum deprivation, leading to increased level of acetylated FOXO1, which promotes stress-induced autophagy by stimulating E1-like activating enzyme ATG7. Interacts (acetylated form) with ATG7; the interaction is increased in response to oxidative stress or serum deprivation and promotes the autophagic process leading to cell death. Interacts (acetylated form) with PPARG. Interacts with XBP1 isoform 2; this interaction is direct and leads to FOXO1 ubiquitination and degradation via the proteasome pathway. Interacts (via the Fork-head domain) with CEBPA; the interaction increases when FOXO1 is deacetylated. Interacts with WDFY2. Forms a complex with WDFY2 and AKT1. Interacts with CRY1. Interacts with PPIA/CYPA; the interaction promotes FOXO1 dephosphorylation, nuclear accumulation and transcriptional activity. Interacts with TOX4; FOXO1 is required for full induction of TOX4-dependent activity and the interaction is inhibited by insulin. Interacts (when phosphorylated on Ser-253) with STUB1/CHIP. Phosphorylation by NLK promotes nuclear export and inhibits the transcriptional activity. In response to growth factors, phosphorylation on Thr-24, Ser-253 and Ser-319 by PKB/AKT1 promotes nuclear export and inactivation of transactivational activity. Phosphorylation on Thr-24 is required for binding 14-3-3 proteins. Phosphorylation of Ser-253 decreases DNA-binding activity and promotes the phosphorylation of Thr-24 and Ser-316, permitting phosphorylation of Ser-319 and Ser-322, probably by CDK1, leading to nuclear exclusion and loss of function. Stress signals, such as response to oxygen or nitric oxide, attenuate the PKB/AKT1-mediated phosphorylation leading to nuclear retention. Phosphorylation of Ser-326 is independent of IGF1 and leads to reduced function. Dephosphorylated on Thr-24 and Ser-253 by PP2A in beta-cells under oxidative stress leading to nuclear retention. Phosphorylation of Ser-246 by CDK1 disrupts binding of 14-3-3 proteins leading to nuclear accumulation and has no effect on DNA-binding nor transcriptional activity. Phosphorylation by STK4/MST1 on Ser-209, upon oxidative stress, inhibits binding to 14-3-3 proteins and nuclear export. PPIA/CYPA promotes its dephosphorylation on Ser-253. Post-translationally, ubiquitinated by SKP2. Ubiquitinated, leading to proteasomal degradation. Ubiquitinated by STUB1/CHIP; when Ser-253 is phosphorylated. In terms of processing, methylation inhibits PKB/AKT1-mediated phosphorylation at Ser-253, promoting nuclear retention and increasing the transcriptional activity and cell death. Methylation increased by oxidative stress. Acetylation at Lys-259 and Lys-271 are necessary for autophagic cell death induction. Deacetylated by SIRT2 in response to oxidative stress or serum deprivation, thereby negatively regulating FOXO1-mediated autophagic cell death. Once in the nucleus, acetylated by CREBBP/EP300. Acetylation diminishes the interaction with target DNA and attenuates the transcriptional activity. It increases the phosphorylation at Ser-253, and is required for the transcriptional inhibition by FCOR. Deacetylation by SIRT1 results in reactivation of the transcriptional activity. Acetylation of FOXO1 diminishes its binding to PPARG in adipocytes. Deacetylated by SIRT2; deacetylation of FOXO1 directly increases its repressive binding to PPARG and inhibits adipocyte differentiation. Oxidative stress by hydrogen peroxide treatment appears to promote deacetylation and uncoupling of insulin-induced phosphorylation. By contrast, resveratrol acts independently of acetylation. Acetylated at Lys-420, promoting its localization to the nucleus and transcription factor activity. Deacetylation at Lys-420 by SIRT6, promotes its translocation into the cytoplasm, preventing its transcription factor activity. Deacetylation and subsequent inhibition by SIRT6 has different effects depending on cell types: it inhibits gluconeogenesis in hepatocytes, promotes glucose sensing in pancreatic beta-cells and regulates lipid catabolism in brown adipocytes. As to expression, expressed in liver, white and brown adipose tissues (at protein level).

The protein localises to the cytoplasm. It localises to the nucleus. In terms of biological role, transcription factor that is the main target of insulin signaling and regulates metabolic homeostasis in response to oxidative stress. Binds to the insulin response element (IRE) with consensus sequence 5'-TT[G/A]TTTTG-3' and the related Daf-16 family binding element (DBE) with consensus sequence 5'-TT[G/A]TTTAC-3'. Activity suppressed by insulin. Main regulator of redox balance and osteoblast numbers and controls bone mass. Orchestrates the endocrine function of the skeleton in regulating glucose metabolism. Also acts as a key regulator of chondrogenic commitment of skeletal progenitor cells in response to lipid availability: when lipids levels are low, translocates to the nucleus and promotes expression of SOX9, which induces chondrogenic commitment and suppresses fatty acid oxidation. Acts synergistically with ATF4 to suppress osteocalcin/BGLAP activity, increasing glucose levels and triggering glucose intolerance and insulin insensitivity. Also suppresses the transcriptional activity of RUNX2, an upstream activator of osteocalcin/BGLAP. Acts as an inhibitor of glucose sensing in pancreatic beta cells by acting as a transcription repressor and suppressing expression of PDX1. In hepatocytes, promotes gluconeogenesis by acting together with PPARGC1A and CEBPA to activate the expression of genes such as IGFBP1, G6PC1 and PCK1. Also promotes gluconeogenesis by directly promoting expression of PPARGC1A and G6PC1. Important regulator of cell death acting downstream of CDK1, PKB/AKT1 and STK4/MST1. Promotes neural cell death. Mediates insulin action on adipose tissue. Regulates the expression of adipogenic genes such as PPARG during preadipocyte differentiation and, adipocyte size and adipose tissue-specific gene expression in response to excessive calorie intake. Regulates the transcriptional activity of GADD45A and repair of nitric oxide-damaged DNA in beta-cells. Required for the autophagic cell death induction in response to starvation or oxidative stress in a transcription-independent manner. Mediates the function of MLIP in cardiomyocytes hypertrophy and cardiac remodeling. Positive regulator of apoptosis in cardiac smooth muscle cells as a result of its transcriptional activation of pro-apoptotic genes. Regulates endothelial cell (EC) viability and apoptosis in a PPIA/CYPA-dependent manner via transcription of CCL2 and BCL2L11 which are involved in EC chemotaxis and apoptosis. This Mus musculus (Mouse) protein is Forkhead box protein O1 (Foxo1).